We begin with the raw amino-acid sequence, 141 residues long: UPF0102 protein BRADO0179 (141 aa).

Residues 1–24 (MAETDRATDKPAGAPKPAKTASPE) form a disordered region. Low complexity predominate over residues 10 to 19 (KPAGAPKPAK).

Belongs to the UPF0102 family.

This is UPF0102 protein BRADO0179 from Bradyrhizobium sp. (strain ORS 278).